The primary structure comprises 348 residues: Doublesex- and mab-3-related transcription factor dmd-10 (348 aa).

2 consecutive DNA-binding regions (DM) follow at residues 43–91 (CQRC…YNQF) and 119–166 (CQKC…KIRR). The disordered stretch occupies residues 316–348 (SMSMSSSPSKDDESGDEDSDGLNSNSIIDVITV).

The protein belongs to the DMRT family. In terms of tissue distribution, dimorphically expressed in the dimorphically connected interneuron AVG; expression is observed in the AVG in males, but not in hermaphrodites.

The protein localises to the nucleus. Functionally, transcription factor. Plays a role in neuronal signaling in polymodal sensory neuron ASH, downstream of sensory receptor activation. Required for maintenance of AVG synapses. The protein is Doublesex- and mab-3-related transcription factor dmd-10 of Caenorhabditis elegans.